A 140-amino-acid polypeptide reads, in one-letter code: MSEEFDESEIIFSDNYFPIRRREDGNEKENNRPVDFRENSERVWNKSSRRSKTTPLPSAVTAFSSSLPVNIPMRRYSTEEEYSDDDGGRKMIPPHLIVGRRMEGGQMAFSVCTGNGRTLKGRDLSRVRNSVLKLTGFLEA.

The disordered stretch occupies residues 16-58 (YFPIRRREDGNEKENNRPVDFRENSERVWNKSSRRSKTTPLPS). Over residues 20-44 (RRREDGNEKENNRPVDFRENSERVW) the composition is skewed to basic and acidic residues.

The protein belongs to the senescence regulator S40 family.

It localises to the cytoplasm. The chain is Protein S40-1 from Arabidopsis thaliana (Mouse-ear cress).